A 364-amino-acid polypeptide reads, in one-letter code: Histidinol-phosphate aminotransferase (364 aa).

Lysine 226 is modified (N6-(pyridoxal phosphate)lysine).

It belongs to the class-II pyridoxal-phosphate-dependent aminotransferase family. Histidinol-phosphate aminotransferase subfamily. In terms of assembly, homodimer. The cofactor is pyridoxal 5'-phosphate.

The enzyme catalyses L-histidinol phosphate + 2-oxoglutarate = 3-(imidazol-4-yl)-2-oxopropyl phosphate + L-glutamate. It functions in the pathway amino-acid biosynthesis; L-histidine biosynthesis; L-histidine from 5-phospho-alpha-D-ribose 1-diphosphate: step 7/9. The sequence is that of Histidinol-phosphate aminotransferase from Campylobacter jejuni (strain RM1221).